The sequence spans 126 residues: MSWQDYVDKQLMASRCVTKAAIAGHDGNVWAKSEGFEISKDEVAKIVAGFENESLLTSGGVTIAGTRYIYLSGTDHIIRAKLGKVGVHCMKTQQAVVISLYEEPIQPQQAASVVEKLGEYLITCGY.

Belongs to the profilin family. As to quaternary structure, occurs in many kinds of cells as a complex with monomeric actin in a 1:1 ratio.

The protein resides in the cytoplasm. Its subcellular location is the cytoskeleton. Functionally, binds to actin and affects the structure of the cytoskeleton. At high concentrations, profilin prevents the polymerization of actin, whereas it enhances it at low concentrations. By binding to PIP2, it inhibits the formation of IP3 and DG. This is Profilin from Bombyx mori (Silk moth).